Here is a 104-residue protein sequence, read N- to C-terminus: Acetylcholine receptor subunit alpha (104 aa).

Topologically, residues 1 to 104 (NPPAIFKSYC…YFIVNVIIPC (104 aa)) are extracellular. Intrachain disulfides connect Cys10/Cys24 and Cys74/Cys75. Asn23 is a glycosylation site (N-linked (GlcNAc...) asparagine).

The protein belongs to the ligand-gated ion channel (TC 1.A.9) family. Acetylcholine receptor (TC 1.A.9.1) subfamily. Alpha-1/CHRNA1 sub-subfamily. In terms of assembly, one of the alpha chains that assemble within the acetylcholine receptor, a pentamer of two alpha chains, a beta, a delta, and a gamma or epsilon chains.

The protein resides in the postsynaptic cell membrane. The protein localises to the cell membrane. It catalyses the reaction K(+)(in) = K(+)(out). The enzyme catalyses Na(+)(in) = Na(+)(out). Functionally, upon acetylcholine binding, the AChR responds by an extensive change in conformation that affects all subunits and leads to opening of an ion-conducting channel across the plasma membrane. The polypeptide is Acetylcholine receptor subunit alpha (CHRNA1) (Naja naja (Indian cobra)).